We begin with the raw amino-acid sequence, 378 residues long: Pre-B-cell leukemia transcription factor 4 (378 aa).

The segment covering 1–15 has biased composition (pro residues); it reads MAAPLRPVPPQPAPR. 2 disordered regions span residues 1 to 24 and 100 to 125; these read MAAP…APLG and VSRP…PNDN. The region spanning 22-214 is the PBC domain; that stretch reads PLGHDTSDVL…VMTLRSRFLD (193 aa). The segment at 29–107 is PBC-A; it reads DVLQQIMAIT…EGVSRPEKRG (79 aa). Residues 109-120 show a composition bias toward low complexity; sequence GAAAGSTATPGG. The PBC-B stretch occupies residues 110 to 214; that stretch reads AAAGSTATPG…VMTLRSRFLD (105 aa). The segment at residues 215–277 is a DNA-binding region (homeobox; TALE-type); it reads ARRKRRNFSK…NKRIRYKKNT (63 aa). 2 disordered regions span residues 291–320 and 355–378; these read ASTV…PLPL and RAAP…AASN. Residues 356 to 370 are compositionally biased toward low complexity; that stretch reads AAPQPASSPAGESGS.

This sequence belongs to the TALE/PBX homeobox family. Almost exclusively expressed in testis.

It localises to the nucleus. The chain is Pre-B-cell leukemia transcription factor 4 (Pbx4) from Mus musculus (Mouse).